The chain runs to 132 residues: D-beta-hydroxybutyrate dehydrogenase, mitochondrial (132 aa).

3 to 27 (LVTGCDSGFGFSLAKHLHSKGFLVF) is an NAD(+) binding site. K17 carries the post-translational modification N6-acetyllysine. Residue S59 coordinates substrate. Y66 acts as the Proton acceptor in catalysis. An N6-acetyllysine modification is found at K70. An O-linked (GlcNAc) serine glycan is attached at S77. S104 is subject to Phosphoserine.

This sequence belongs to the short-chain dehydrogenases/reductases (SDR) family. In terms of assembly, homotetramer.

Its subcellular location is the mitochondrion inner membrane. It localises to the mitochondrion matrix. It catalyses the reaction (R)-3-hydroxybutanoate + NAD(+) = acetoacetate + NADH + H(+). Its activity is regulated as follows. Requires phosphatidylcholine as an allosteric activator for enzymatic activity. The polypeptide is D-beta-hydroxybutyrate dehydrogenase, mitochondrial (Mesocricetus auratus (Golden hamster)).